Consider the following 132-residue polypeptide: L-ectoine synthase (132 aa).

It belongs to the ectoine synthase family.

The catalysed reaction is (2S)-4-acetamido-2-aminobutanoate = L-ectoine + H2O. It participates in amine and polyamine biosynthesis; ectoine biosynthesis; L-ectoine from L-aspartate 4-semialdehyde: step 3/3. In terms of biological role, catalyzes the circularization of gamma-N-acetyl-alpha,gamma-diaminobutyric acid (ADABA) to ectoine (1,4,5,6-tetrahydro-2-methyl-4-pyrimidine carboxylic acid), which is an excellent osmoprotectant. This is L-ectoine synthase from Bordetella avium (strain 197N).